The chain runs to 493 residues: Polyamine aminopropyltransferase 2 (493 aa).

Helical transmembrane passes span 9-29, 32-52, 68-88, 101-121, 137-157, 161-181, and 188-208; these read LCIF…ATLA, LLGN…LSMG, LAFV…VPIA, VIYG…PLAV, VLEK…YLFL, GLPL…FLLV, and KFLK…AVGH. A spermidine synthase region spans residues 187 to 448; it reads KKFLKFLAIF…PLNFENFELK (262 aa). In terms of domain architecture, PABS spans 202-437; that stretch reads ATYAVGHKRI…GEWGMVIGSK (236 aa). Gln-233 lines the S-methyl-5'-thioadenosine pocket. Positions 263 and 287 each coordinate spermidine. Residues Asp-306 and 340-341 each bind S-methyl-5'-thioadenosine; that span reads DA. Asp-358 serves as the catalytic Proton acceptor.

This sequence belongs to the spermidine/spermine synthase family. In terms of assembly, homodimer or homotetramer.

It localises to the cell membrane. The enzyme catalyses S-adenosyl 3-(methylsulfanyl)propylamine + putrescine = S-methyl-5'-thioadenosine + spermidine + H(+). It functions in the pathway amine and polyamine biosynthesis; spermidine biosynthesis; spermidine from putrescine: step 1/1. Catalyzes the irreversible transfer of a propylamine group from the amino donor S-adenosylmethioninamine (decarboxy-AdoMet) to putrescine (1,4-diaminobutane) to yield spermidine. This Aquifex aeolicus (strain VF5) protein is Polyamine aminopropyltransferase 2.